The primary structure comprises 158 residues: Transcriptional regulator MraZ (158 aa).

2 SpoVT-AbrB domains span residues asparagine 7 to valine 54 and valine 84 to arginine 127.

The protein belongs to the MraZ family. As to quaternary structure, forms oligomers.

The protein resides in the cytoplasm. It localises to the nucleoid. This is Transcriptional regulator MraZ from Bacteroides fragilis (strain ATCC 25285 / DSM 2151 / CCUG 4856 / JCM 11019 / LMG 10263 / NCTC 9343 / Onslow / VPI 2553 / EN-2).